The primary structure comprises 326 residues: Toluene-4-monooxygenase system, ferredoxin--NAD(+) reductase component (326 aa).

The region spanning 1–92 (MFNIQSDDLL…DLKIKVINRA (92 aa)) is the 2Fe-2S ferredoxin-type domain. [2Fe-2S] cluster-binding residues include Cys36, Cys41, Cys44, and Cys76. The tract at residues 95-326 (RASHPPKRFS…FEAIHFDRFF (232 aa)) is ferredoxin-reductase. The region spanning 100 to 195 (PKRFSTRVVS…DGPYGLSVLK (96 aa)) is the FAD-binding FR-type domain. Residues 146 to 149 (RAYS), 162 to 164 (IVK), and 170 to 172 (KVS) contribute to the FAD site.

It belongs to the bacterial ring-hydroxylating dioxygenase ferredoxin reductase family. Monomer. The alkene monooxygenase multicomponent enzyme system is composed of an electron transfer component and a monooxygenase component interacting with the effector protein TmoD. The electron transfer component is composed of a ferredoxin reductase (TmoF) and a ferredoxin (TmoC), and the monooxygenase component is formed by a heterohexamer (dimer of heterotrimers) of two alpha subunits (TmoA), two beta subunits (TmoE) and two gamma subunits (TmoB). FAD is required as a cofactor. The cofactor is [2Fe-2S] cluster.

The enzyme catalyses 2 reduced [2Fe-2S]-[ferredoxin] + NAD(+) + H(+) = 2 oxidized [2Fe-2S]-[ferredoxin] + NADH. The protein operates within xenobiotic degradation; toluene degradation. Its function is as follows. Reductase component of the toluene-4-monooxygenase multicomponent enzyme system which catalyzes the O2- and NADH-dependent hydroxylation of toluene to form p-cresol. Ferredoxin reductase catalyzes the transfer of electrons from NADH to ferredoxin (TmoC). The polypeptide is Toluene-4-monooxygenase system, ferredoxin--NAD(+) reductase component (Ectopseudomonas mendocina (Pseudomonas mendocina)).